A 181-amino-acid chain; its full sequence is Large ribosomal subunit protein uL16 (181 aa).

Belongs to the universal ribosomal protein uL16 family.

The polypeptide is Large ribosomal subunit protein uL16 (Pyrococcus horikoshii (strain ATCC 700860 / DSM 12428 / JCM 9974 / NBRC 100139 / OT-3)).